A 139-amino-acid polypeptide reads, in one-letter code: MGREKKQEYALFTAWGASFIATLGSLYFSEIMKFEPCVLCWYQRIFMYPFVLWLGIAVVKKDYRIANYSLPIASIGACISLYHYAIQKIAAFSAAGAACGRVPCTGEYINWFGFVTIPFLALIGFITIAVCSFIVIKNK.

A helical membrane pass occupies residues 8-27 (EYALFTAWGASFIATLGSLY). Cysteine 37 and cysteine 40 are oxidised to a cystine. A run of 2 helical transmembrane segments spans residues 42-61 (YQRI…VVKK) and 68-85 (YSLP…YHYA). Cysteine 99 and cysteine 104 are oxidised to a cystine. The chain crosses the membrane as a helical span at residues 113–135 (GFVTIPFLALIGFITIAVCSFIV).

This sequence belongs to the DsbB family. BdbC subfamily.

It is found in the cell membrane. Functionally, required for disulfide bond formation in some proteins. This chain is Probable disulfide formation protein C 1 (bdbC1), found in Bacillus cereus (strain ATCC 10987 / NRS 248).